Consider the following 337-residue polypeptide: ATP-dependent 6-phosphofructokinase (337 aa).

Gly-11 lines the ATP pocket. 21-25 (RAVVR) contributes to the ADP binding site. ATP-binding positions include 72-73 (RY) and 102-105 (GDGS). Asp-103 lines the Mg(2+) pocket. 125–127 (TID) lines the substrate pocket. The active-site Proton acceptor is the Asp-127. Arg-154 contributes to the ADP binding site. Residues Arg-162 and 169-171 (MGR) each bind substrate. Residues 185–187 (GAD) and 214–216 (KNH) contribute to the ADP site. Substrate is bound by residues Glu-223, Arg-245, and 251–254 (HILR).

The protein belongs to the phosphofructokinase type A (PFKA) family. ATP-dependent PFK group I subfamily. Prokaryotic clade 'B1' sub-subfamily. In terms of assembly, homotetramer. Mg(2+) is required as a cofactor.

It is found in the cytoplasm. It carries out the reaction beta-D-fructose 6-phosphate + ATP = beta-D-fructose 1,6-bisphosphate + ADP + H(+). It functions in the pathway carbohydrate degradation; glycolysis; D-glyceraldehyde 3-phosphate and glycerone phosphate from D-glucose: step 3/4. Allosterically activated by ADP and other diphosphonucleosides, and allosterically inhibited by phosphoenolpyruvate. Its function is as follows. Catalyzes the phosphorylation of D-fructose 6-phosphate to fructose 1,6-bisphosphate by ATP, the first committing step of glycolysis. In Streptococcus mutans serotype c (strain ATCC 700610 / UA159), this protein is ATP-dependent 6-phosphofructokinase.